We begin with the raw amino-acid sequence, 477 residues long: tRNA(Ile)-lysidine synthase (477 aa).

Residue 36–41 (SGGADS) coordinates ATP.

Belongs to the tRNA(Ile)-lysidine synthase family.

It is found in the cytoplasm. The catalysed reaction is cytidine(34) in tRNA(Ile2) + L-lysine + ATP = lysidine(34) in tRNA(Ile2) + AMP + diphosphate + H(+). Functionally, ligates lysine onto the cytidine present at position 34 of the AUA codon-specific tRNA(Ile) that contains the anticodon CAU, in an ATP-dependent manner. Cytidine is converted to lysidine, thus changing the amino acid specificity of the tRNA from methionine to isoleucine. The chain is tRNA(Ile)-lysidine synthase from Treponema pallidum (strain Nichols).